Here is a 95-residue protein sequence, read N- to C-terminus: Co-chaperonin GroES (95 aa).

This sequence belongs to the GroES chaperonin family. As to quaternary structure, heptamer of 7 subunits arranged in a ring. Interacts with the chaperonin GroEL.

The protein localises to the cytoplasm. Its function is as follows. Together with the chaperonin GroEL, plays an essential role in assisting protein folding. The GroEL-GroES system forms a nano-cage that allows encapsulation of the non-native substrate proteins and provides a physical environment optimized to promote and accelerate protein folding. GroES binds to the apical surface of the GroEL ring, thereby capping the opening of the GroEL channel. The sequence is that of Co-chaperonin GroES from Beijerinckia indica subsp. indica (strain ATCC 9039 / DSM 1715 / NCIMB 8712).